A 139-amino-acid chain; its full sequence is Putative lipoprotein LpqV (139 aa).

The first 25 residues, 1–25, serve as a signal peptide directing secretion; sequence MRPSRYAPLLCAMVLALAWLSAVAG. The N-palmitoyl cysteine moiety is linked to residue Cys-26. Residue Cys-26 is the site of S-diacylglycerol cysteine attachment.

It localises to the cell membrane. The sequence is that of Putative lipoprotein LpqV (lpqV) from Mycobacterium bovis (strain ATCC BAA-935 / AF2122/97).